We begin with the raw amino-acid sequence, 215 residues long: Eukaryotic translation initiation factor 4E-1A (215 aa).

Low complexity predominate over residues 1–14 (MATAEPETSTNPSN). Residues 1–23 (MATAEPETSTNPSNSEEKNEENE) are disordered. Residues 54-55 (WQ), 100-101 (WE), 155-160 (RTKGDK), and 203-205 (TKS) each bind mRNA.

Belongs to the eukaryotic initiation factor 4E family. Interacts with eif4ebp3l. Expressed in all tissues examined, including gill, fin, heart, intestine, muscle, ovary and testis.

It is found in the cytoplasm. Its subcellular location is the nucleus. Its function is as follows. Recognizes and binds the 7-methylguanosine (m7G)-containing mRNA cap during an early step in the initiation of protein synthesis and facilitates ribosome binding by inducing the unwinding of the mRNAs secondary structures. Also promotes export of a subset of mRNAs from the nucleus to the cytoplasm. This is Eukaryotic translation initiation factor 4E-1A from Danio rerio (Zebrafish).